The sequence spans 77 residues: DNA-directed RNA polymerase subunit omega (77 aa).

It belongs to the RNA polymerase subunit omega family. In cyanobacteria the RNAP catalytic core is composed of 2 alpha, 1 beta, 1 beta', 1 gamma and 1 omega subunit. When a sigma factor is associated with the core the holoenzyme is formed, which can initiate transcription.

It carries out the reaction RNA(n) + a ribonucleoside 5'-triphosphate = RNA(n+1) + diphosphate. Promotes RNA polymerase assembly. Latches the N- and C-terminal regions of the beta' subunit thereby facilitating its interaction with the beta and alpha subunits. The protein is DNA-directed RNA polymerase subunit omega of Thermosynechococcus vestitus (strain NIES-2133 / IAM M-273 / BP-1).